The chain runs to 811 residues: MTEPNRARKTRQRTAFAAPDQRTAPRRGALALRPLVFAVAGVWTAASAAQSQGATQQAASAQAPSSAASVTALAVSGPTTPGGAPLVPKMAEPVKRPDNAVPSFAAADAMDGRTNEDIHLRGHGELRRNGTVVKGDTLDYNQDTDFATATGNVRLFRDGTLVTGPDAALKVTANEGTMHTPSYEFHTVGGRGSAERIDFIDKDNSRITKGTYTTCSPDNVDWYFSASQIDIDSDRQVGSGRAGVLHFLGMPVFASPVFDFPLNDERRSGFLAPVFGYSSRSGADVTLPYYFNIAPNRDLTLYPRLLSQRGLQLGAEYRYLSQTYNGVLRGEFLPNDREADRNRWSIALVHNQRLATGLNAYVNYNKVSDSTYPDDLGRSIVTATQRQYTQEGGVTYSIGDWVALARVQKFQTLSTATTALSPPYERVPQLNLSYNRYDVGGFDINFQTDYTKFSIPTENTVQGERLFMQPTISYPIIRPGWFVTPKFILNTTSYRLDRPTGDTQASQINRTLPTVSLDSGLTFERDTPLVSKWFGRSYIQTLEPRLFYVYTPFRDQSQIPLFDTAQSDYNLGQIFTENPYTGYDRIADNNKLTAGVTTRFIESETGIERLRATLAQRLDFEGQRVTLAGSAPTSVRRYSDLLGATTIQMFRGIFFDTNLQYNQDIDRIMRSTMAFSWKPDANKVINLGYRYYRADANTGQLALEQTDISAQWPLTRRLYGLGRIGYDMDAKKPSDMLLGFEYVADCWVGRLAVQRYSNATSGYTTHIFAQIEFKGLSKVGNNPIDVIRLNVPGYQPVTAQPVTPSVLDQYE.

Residues 1 to 17 (MTEPNRARKTRQRTAFA) form the signal peptide. Positions 1 to 22 (MTEPNRARKTRQRTAFAAPDQR) are disordered.

The protein belongs to the LptD family. Component of the lipopolysaccharide transport and assembly complex. Interacts with LptE and LptA.

The protein localises to the cell outer membrane. In terms of biological role, together with LptE, is involved in the assembly of lipopolysaccharide (LPS) at the surface of the outer membrane. In Ralstonia nicotianae (strain ATCC BAA-1114 / GMI1000) (Ralstonia solanacearum), this protein is LPS-assembly protein LptD.